Here is a 637-residue protein sequence, read N- to C-terminus: 1,4-alpha-glucan branching enzyme GlgB (637 aa).

Catalysis depends on Asp307, which acts as the Nucleophile. Residue Glu361 is the Proton donor of the active site.

It belongs to the glycosyl hydrolase 13 family. GlgB subfamily. In terms of assembly, monomer.

The enzyme catalyses Transfers a segment of a (1-&gt;4)-alpha-D-glucan chain to a primary hydroxy group in a similar glucan chain.. It functions in the pathway glycan biosynthesis; glycogen biosynthesis. In terms of biological role, catalyzes the formation of the alpha-1,6-glucosidic linkages in glycogen by scission of a 1,4-alpha-linked oligosaccharide from growing alpha-1,4-glucan chains and the subsequent attachment of the oligosaccharide to the alpha-1,6 position. The polypeptide is 1,4-alpha-glucan branching enzyme GlgB (Oceanobacillus iheyensis (strain DSM 14371 / CIP 107618 / JCM 11309 / KCTC 3954 / HTE831)).